A 627-amino-acid chain; its full sequence is MNERADRSGGAAPGGDRTHRVPVLVVGGSLVGLSTSVFLGRLGVRHTLVERHAGTSIHPRGRGNNVRTMEIFRVAGTEPDIRRAAATLADNHGILQAPTLAGDAGEWLFKQIDPGGGLARFSPSSWCLCSQNDLEPELLTHATNLGGDLRFGTELLSFEADTEGVTAIVKSRETGEHTTIRADYLVAADGPRSPVREQLGIGQSGPGDLFHNVSITFRSRRLADVVGDRRFIVCYLTDENADGALLPVDNRENWVFHAPWHPEQGETVEDFTDERCAAHIRRAIGDPDLDVEITGKAPWHAAQRVARSYRSGRVLLAGDSAHEMSPTGAFGSNTGIQDAHNLAWKLAAVLEGWAGEALLDTYDTERRPVAEATSARAAHRSVEHSHPGFAPPPVAGGGGPGAGTPGGAGRGTGGPGGPGGPGGLGGPGGPGGTGGPGGPGGPGGPDGPRGAGGAPGGGPGGGPGGGGPQRGILNVALGYRYPRGAVVGADPATPVVPEGLDLTGAPGSRAPHLWVRRGQDRLSTLDLYEDSLVLLSDAAQPTGWHEAAAGVAAGMRVPLKSYRVGGSPGADLNPDDEETDWARAHGVTRGGAVLVRPDGFVAWRSPGPAPDPESMLRQVVGTVLARS.

Residues 22-51 (PVLV…LVER) and 309-319 (YRSGRVLLAGD) contribute to the FAD site. The segment at 370–469 (AEATSARAAH…GGGPGGGGPQ (100 aa)) is disordered. Residues 395-469 (AGGGGPGAGT…GGGPGGGGPQ (75 aa)) are compositionally biased toward gly residues.

Belongs to the PheA/TfdB FAD monooxygenase family. FAD is required as a cofactor.

Involved in developmentally regulated synthesis of a compound biosynthetically related to polyketide antibiotics which is essential for spore color in Streptococcus coelicolor. This Streptomyces coelicolor (strain ATCC BAA-471 / A3(2) / M145) protein is Putative polyketide hydroxylase.